The chain runs to 284 residues: Tropomyosin (284 aa).

A coiled-coil region spans residues 1–273; that stretch reads MEAIKKKMQA…KEKYKSISDE (273 aa).

It belongs to the tropomyosin family. Homodimer. In terms of tissue distribution, ubiquitous, but especially prevalent in the anterior muscle bundles associated with legs. Expression in the mid and posterior regions is probably related to the numerous, small muscle bundles associated with the digestive and reproductive systems (at protein level).

Functionally, tropomyosin, in association with the troponin complex, plays a central role in the calcium dependent regulation of muscle contraction. In Psoroptes ovis (Sheep scab mite), this protein is Tropomyosin.